Reading from the N-terminus, the 30-residue chain is Phospholipase A2 acanmyotoxin-2 (30 aa).

The Ca(2+) site is built by Tyr-28 and Gly-30.

Ca(2+) serves as cofactor. Contains seven disulfide bonds. Expressed by the venom gland.

The protein localises to the secreted. The enzyme catalyses a 1,2-diacyl-sn-glycero-3-phosphocholine + H2O = a 1-acyl-sn-glycero-3-phosphocholine + a fatty acid + H(+). Snake venom phospholipase A2 (PLA2) that has myotoxic activity but no significant neurotoxicity. PLA2 catalyzes the calcium-dependent hydrolysis of the 2-acyl groups in 3-sn-phosphoglycerides. The protein is Phospholipase A2 acanmyotoxin-2 of Acanthophis sp. (strain Seram) (Seram death adder).